Here is a 684-residue protein sequence, read N- to C-terminus: Sorbicillinoid biosynthetic cluster transcription factor 2 (684 aa).

The segment at 114–151 (ISSAPSLETPPESVAASPPTVDSIPVSHHVNEDPEAEP) is disordered.

It localises to the nucleus. Transcription factor that acts in concert with sorR1 which is a transcriptional activator of the gene cluster that mediates the biosynthesis of sorbicillinoids, a diverse group of yellow secondary metabolites that restrict growth of competing pathogenic fungi but not of bacteria. The polypeptide is Sorbicillinoid biosynthetic cluster transcription factor 2 (Penicillium rubens (strain ATCC 28089 / DSM 1075 / NRRL 1951 / Wisconsin 54-1255) (Penicillium chrysogenum)).